Reading from the N-terminus, the 204-residue chain is Large ribosomal subunit protein uL4 (204 aa).

A disordered region spans residues 53–74; that stretch reads AYVSGGGKKPWRQKGRGGARAG.

Belongs to the universal ribosomal protein uL4 family. Part of the 50S ribosomal subunit.

One of the primary rRNA binding proteins, this protein initially binds near the 5'-end of the 23S rRNA. It is important during the early stages of 50S assembly. It makes multiple contacts with different domains of the 23S rRNA in the assembled 50S subunit and ribosome. Its function is as follows. Forms part of the polypeptide exit tunnel. The polypeptide is Large ribosomal subunit protein uL4 (Campylobacter curvus (strain 525.92)).